We begin with the raw amino-acid sequence, 697 residues long: Heat shock protein homolog SSE1 (697 aa).

Low complexity predominate over residues 664–674 (EMAEKLAAQRA). The interval 664–697 (EMAEKLAAQRAAEQKAQESKAESDKDAEGDIDLD) is disordered. Over residues 675–691 (AEQKAQESKAESDKDAE) the composition is skewed to basic and acidic residues.

It belongs to the heat shock protein 70 family.

The protein resides in the cytoplasm. This Eremothecium gossypii (strain ATCC 10895 / CBS 109.51 / FGSC 9923 / NRRL Y-1056) (Yeast) protein is Heat shock protein homolog SSE1 (SSE1).